The primary structure comprises 54 residues: Small ribosomal subunit protein uS14 (54 aa).

Cys19, Cys22, Cys37, and Cys40 together coordinate Zn(2+).

Belongs to the universal ribosomal protein uS14 family. Zinc-binding uS14 subfamily. As to quaternary structure, part of the 30S ribosomal subunit. Zn(2+) serves as cofactor.

In terms of biological role, binds 16S rRNA, required for the assembly of 30S particles. The polypeptide is Small ribosomal subunit protein uS14 (Saccharolobus solfataricus (strain ATCC 35092 / DSM 1617 / JCM 11322 / P2) (Sulfolobus solfataricus)).